A 72-amino-acid chain; its full sequence is Large ribosomal subunit protein bL31 (72 aa).

Zn(2+) contacts are provided by C16, C18, C37, and C40.

It belongs to the bacterial ribosomal protein bL31 family. Type A subfamily. Part of the 50S ribosomal subunit. It depends on Zn(2+) as a cofactor.

In terms of biological role, binds the 23S rRNA. The protein is Large ribosomal subunit protein bL31 of Buchnera aphidicola subsp. Acyrthosiphon pisum (strain APS) (Acyrthosiphon pisum symbiotic bacterium).